The sequence spans 333 residues: GTPase Obg (333 aa).

One can recognise an Obg domain in the interval 1 to 158 (MFIDSAKIYV…RNIDLELKLL (158 aa)). A disordered region spans residues 121-143 (HGGKGNQHFATPTNRAPRYSEPA). The OBG-type G domain maps to 159–323 (ADIGLVGFPN…LKDVLWRIIQ (165 aa)). GTP contacts are provided by residues 165 to 172 (GFPNAGKS), 190 to 194 (FTTLE), 212 to 215 (DIPG), 279 to 282 (SKMD), and 304 to 306 (SSV). The Mg(2+) site is built by S172 and T192.

It belongs to the TRAFAC class OBG-HflX-like GTPase superfamily. OBG GTPase family. In terms of assembly, monomer. The cofactor is Mg(2+).

It is found in the cytoplasm. In terms of biological role, an essential GTPase which binds GTP, GDP and possibly (p)ppGpp with moderate affinity, with high nucleotide exchange rates and a fairly low GTP hydrolysis rate. Plays a role in control of the cell cycle, stress response, ribosome biogenesis and in those bacteria that undergo differentiation, in morphogenesis control. In Chloroherpeton thalassium (strain ATCC 35110 / GB-78), this protein is GTPase Obg.